The following is a 309-amino-acid chain: MKPLLDVLMILDALEKEGSFAAASAKLYKTPSALSYTVHKLESDLNIQLLDRSGHRAKFTRTGKMLLEKGREVLHTVRELEKQAIKLHEGWENELVIGVDDTFPFSLLAPLIEAFYQHHSVTRLKFINGVLGGSWDALTQGRADIIVGAMHEPPSSSEFGFSRLGDLEQVFAVAPHHPLALEEEPLNRRIIKRYRAIVVGDTAQAGASTASQLLDEQEAITVFDFKTKLELQISGLGCGYLPRYLAQRFLDSGALIEKKVVAQTLFEPVWIGWNEQTAGLASGWWRDEILANSAIAGVYAKSDDGKSAI.

Residues 1–60 enclose the HTH lysR-type domain; sequence MKPLLDVLMILDALEKEGSFAAASAKLYKTPSALSYTVHKLESDLNIQLLDRSGHRAKFT. Positions 20–39 form a DNA-binding region, H-T-H motif; that stretch reads FAAASAKLYKTPSALSYTVH.

Belongs to the LysR transcriptional regulatory family.

This is an uncharacterized protein from Escherichia coli (strain K12).